The chain runs to 616 residues: Endonuclease 8-like 3 (616 aa).

The segment at 271–305 (KVYKRPNCGQCGTKITVCRLGEHNRMTYFCPKCQK) adopts an FPG-type zinc-finger fold. The RanBP2-type zinc-finger motif lies at 341–370 (KEEHWACAVCTLINKPSDKQCDACLTLRPE). The tract at residues 491 to 524 (LKTGHTTSNTIHLSSTISSPQSKMTGDAAAKTGN) is disordered. Residues 494-514 (GHTTSNTIHLSSTISSPQSKM) are compositionally biased toward polar residues. Residues Cys527, His530, Cys553, Cys561, Cys574, His576, Cys599, and Cys607 each contribute to the Zn(2+) site. 2 GRF-type zinc fingers span residues 527 to 570 (CSAH…ADLH) and 574 to 616 (CNHG…AKTE).

Belongs to the FPG family.

The protein resides in the nucleus. It localises to the chromosome. The catalysed reaction is 2'-deoxyribonucleotide-(2'-deoxyribose 5'-phosphate)-2'-deoxyribonucleotide-DNA = a 3'-end 2'-deoxyribonucleotide-(2,3-dehydro-2,3-deoxyribose 5'-phosphate)-DNA + a 5'-end 5'-phospho-2'-deoxyribonucleoside-DNA + H(+). In terms of biological role, DNA glycosylase which prefers single-stranded DNA (ssDNA), or partially ssDNA structures such as bubble and fork structures, to double-stranded DNA (dsDNA). Mediates interstrand cross-link repair in response to replication stress: recruited to replication stress sites via interaction with ubiquitinated CMG helicase and acts by mediating DNA glycosylase activity. Cleaves one of the two N-glycosyl bonds comprising the interstrand cross-link, which avoids the formation of a double-strand break but generates an abasic site that is bypassed by translesion synthesis polymerases. This chain is Endonuclease 8-like 3, found in Xenopus laevis (African clawed frog).